A 124-amino-acid polypeptide reads, in one-letter code: Small ribosomal subunit protein uS12 (124 aa).

A disordered region spans residues 1–32 (MPTIQQLVRKGRQAKTTKTKTPALKGSPQRRG). The span at 9–18 (RKGRQAKTTK) shows a compositional bias: basic residues. D89 bears the 3-methylthioaspartic acid mark. The disordered stretch occupies residues 105–124 (QGVRNRKQARSRYGAKKEKS). Basic residues predominate over residues 108–118 (RNRKQARSRYG).

It belongs to the universal ribosomal protein uS12 family. As to quaternary structure, part of the 30S ribosomal subunit. Contacts proteins S8 and S17. May interact with IF1 in the 30S initiation complex.

With S4 and S5 plays an important role in translational accuracy. Its function is as follows. Interacts with and stabilizes bases of the 16S rRNA that are involved in tRNA selection in the A site and with the mRNA backbone. Located at the interface of the 30S and 50S subunits, it traverses the body of the 30S subunit contacting proteins on the other side and probably holding the rRNA structure together. The combined cluster of proteins S8, S12 and S17 appears to hold together the shoulder and platform of the 30S subunit. The polypeptide is Small ribosomal subunit protein uS12 (Salinispora arenicola (strain CNS-205)).